The sequence spans 191 residues: Fe/S biogenesis protein NfuA (191 aa).

Residues cysteine 149 and cysteine 152 each contribute to the [4Fe-4S] cluster site.

It belongs to the NfuA family. As to quaternary structure, homodimer. Requires [4Fe-4S] cluster as cofactor.

Functionally, involved in iron-sulfur cluster biogenesis. Binds a 4Fe-4S cluster, can transfer this cluster to apoproteins, and thereby intervenes in the maturation of Fe/S proteins. Could also act as a scaffold/chaperone for damaged Fe/S proteins. The protein is Fe/S biogenesis protein NfuA of Pectobacterium atrosepticum (strain SCRI 1043 / ATCC BAA-672) (Erwinia carotovora subsp. atroseptica).